A 552-amino-acid chain; its full sequence is CTP synthase (552 aa).

Residues 1–270 are amidoligase domain; sequence MTKFVFVTGG…DGLICDKLRL (270 aa). S13 lines the CTP pocket. Residue S13 participates in UTP binding. ATP contacts are provided by residues 14–19 and D71; that span reads SLGKGI. The Mg(2+) site is built by D71 and E144. Residues 151-153, 191-196, and K227 contribute to the CTP site; these read DIE and KTKPTQ. UTP contacts are provided by residues 191–196 and K227; that span reads KTKPTQ. The region spanning 295-548 is the Glutamine amidotransferase type-1 domain; the sequence is KIAMVGKYVE…VKAAIERQKA (254 aa). Residue G357 participates in L-glutamine binding. The active-site Nucleophile; for glutamine hydrolysis is the C384. L-glutamine-binding positions include 385 to 388, E408, and R474; that span reads LGMQ. Residues H521 and E523 contribute to the active site.

The protein belongs to the CTP synthase family. In terms of assembly, homotetramer.

The enzyme catalyses UTP + L-glutamine + ATP + H2O = CTP + L-glutamate + ADP + phosphate + 2 H(+). It catalyses the reaction L-glutamine + H2O = L-glutamate + NH4(+). The catalysed reaction is UTP + NH4(+) + ATP = CTP + ADP + phosphate + 2 H(+). It participates in pyrimidine metabolism; CTP biosynthesis via de novo pathway; CTP from UDP: step 2/2. With respect to regulation, allosterically activated by GTP, when glutamine is the substrate; GTP has no effect on the reaction when ammonia is the substrate. The allosteric effector GTP functions by stabilizing the protein conformation that binds the tetrahedral intermediate(s) formed during glutamine hydrolysis. Inhibited by the product CTP, via allosteric rather than competitive inhibition. Its function is as follows. Catalyzes the ATP-dependent amination of UTP to CTP with either L-glutamine or ammonia as the source of nitrogen. Regulates intracellular CTP levels through interactions with the four ribonucleotide triphosphates. In Delftia acidovorans (strain DSM 14801 / SPH-1), this protein is CTP synthase.